The chain runs to 317 residues: Methionyl-tRNA formyltransferase (317 aa).

Residue 112-115 participates in (6S)-5,6,7,8-tetrahydrofolate binding; that stretch reads SLLP.

This sequence belongs to the Fmt family.

The catalysed reaction is L-methionyl-tRNA(fMet) + (6R)-10-formyltetrahydrofolate = N-formyl-L-methionyl-tRNA(fMet) + (6S)-5,6,7,8-tetrahydrofolate + H(+). Attaches a formyl group to the free amino group of methionyl-tRNA(fMet). The formyl group appears to play a dual role in the initiator identity of N-formylmethionyl-tRNA by promoting its recognition by IF2 and preventing the misappropriation of this tRNA by the elongation apparatus. In Histophilus somni (strain 129Pt) (Haemophilus somnus), this protein is Methionyl-tRNA formyltransferase.